The sequence spans 1102 residues: Phosphatidylinositol 4,5-bisphosphate 3-kinase catalytic subunit gamma isoform (1102 aa).

Residues 34 to 141 (SMELIPIEFV…PGQIHLVQRH (108 aa)) form the PI3K-ABD domain. Positions 217–309 (NNCIFIVIHR…GEEIHVVLDT (93 aa)) constitute a PI3K-RBD domain. The C2 PI3K-type domain maps to 357–521 (CDRKFRVKIR…NSMSISILLD (165 aa)). Residues 541 to 723 (DRVRAEMPNQ…AVILEAYLRG (183 aa)) form the PIK helical domain. Positions 797–1080 (AIEKCKVMAS…QIEVCRDKGW (284 aa)) constitute a PI3K/PI4K catalytic domain. The interval 803-809 (VMASKKK) is G-loop. ATP-binding positions include 829–838 (GIIFKHGDDL) and 864–872 (LLPYGCIST). A catalytic loop region spans residues 943-951 (GIGDRHNDN). 961–969 (FHIDFGHIL) contacts ATP. Positions 962 to 988 (HIDFGHILGNYKSFLGINKERVPFVLT) are activation loop. Threonine 1024 bears the Phosphothreonine; by PKA mark. At serine 1101 the chain carries Phosphoserine; by autocatalysis.

This sequence belongs to the PI3/PI4-kinase family. Heterodimer of a catalytic subunit PIK3CG and a PIK3R5 or PIK3R6 regulatory subunit. Interacts with GRK2 through the PIK helical domain. Interaction with GRK2 is required for targeting to agonist-occupied receptor. Interacts with PDE3B; regulates PDE3B activity and thereby cAMP levels in cells. Interacts with TPM2. Interacts with EPHA8; regulates integrin-mediated cell adhesion to substrate. Interacts with HRAS; the interaction is required for membrane recruitment and beta-gamma G protein dimer-dependent activation of the PI3K gamma complex PIK3CG:PIK3R6. In terms of processing, autophosphorylation at Ser-1101 has no effect on the phosphatidylinositol-4,5-bisphosphate 3-kinase activity. As to expression, pancreas, skeletal muscle, liver and heart.

It is found in the cytoplasm. Its subcellular location is the cell membrane. The enzyme catalyses a 1,2-diacyl-sn-glycero-3-phospho-(1D-myo-inositol) + ATP = a 1,2-diacyl-sn-glycero-3-phospho-(1D-myo-inositol-3-phosphate) + ADP + H(+). It catalyses the reaction a 1,2-diacyl-sn-glycero-3-phospho-(1D-myo-inositol-4,5-bisphosphate) + ATP = a 1,2-diacyl-sn-glycero-3-phospho-(1D-myo-inositol-3,4,5-trisphosphate) + ADP + H(+). It carries out the reaction a 1,2-diacyl-sn-glycero-3-phospho-(1D-myo-inositol 4-phosphate) + ATP = a 1,2-diacyl-sn-glycero-3-phospho-(1D-myo-inositol-3,4-bisphosphate) + ADP + H(+). The catalysed reaction is L-seryl-[protein] + ATP = O-phospho-L-seryl-[protein] + ADP + H(+). Its pathway is phospholipid metabolism; phosphatidylinositol phosphate biosynthesis. Its activity is regulated as follows. Activated by both the alpha and the beta-gamma G proteins following stimulation of G protein-coupled receptors (GPCRs). Activation by GPCRs is assisted by the regulatory subunits (PIK3R5 or PIK3R6) leading to the translocation from the cytosol to the plasma membrane and to kinase activation. Inhibited by AS-604850 and AS-605240. In terms of biological role, phosphoinositide-3-kinase (PI3K) that phosphorylates PtdIns(4,5)P2 (Phosphatidylinositol 4,5-bisphosphate) to generate phosphatidylinositol 3,4,5-trisphosphate (PIP3). PIP3 plays a key role by recruiting PH domain-containing proteins to the membrane, including AKT1 and PDPK1, activating signaling cascades involved in cell growth, survival, proliferation, motility and morphology. Links G-protein coupled receptor activation to PIP3 production. Involved in immune, inflammatory and allergic responses. Modulates leukocyte chemotaxis to inflammatory sites and in response to chemoattractant agents. May control leukocyte polarization and migration by regulating the spatial accumulation of PIP3 and by regulating the organization of F-actin formation and integrin-based adhesion at the leading edge. Controls motility of dendritic cells. Together with PIK3CD is involved in natural killer (NK) cell development and migration towards the sites of inflammation. Participates in T-lymphocyte migration. Regulates T-lymphocyte proliferation, activation, and cytokine production. Together with PIK3CD participates in T-lymphocyte development. Required for B-lymphocyte development and signaling. Together with PIK3CD participates in neutrophil respiratory burst. Together with PIK3CD is involved in neutrophil chemotaxis and extravasation. Together with PIK3CB promotes platelet aggregation and thrombosis. Regulates alpha-IIb/beta-3 integrins (ITGA2B/ ITGB3) adhesive function in platelets downstream of P2Y12 through a lipid kinase activity-independent mechanism. May have also a lipid kinase activity-dependent function in platelet aggregation. Involved in endothelial progenitor cell migration. Negative regulator of cardiac contractility. Modulates cardiac contractility by anchoring protein kinase A (PKA) and PDE3B activation, reducing cAMP levels. Regulates cardiac contractility also by promoting beta-adrenergic receptor internalization by binding to GRK2 and by non-muscle tropomyosin phosphorylation. Also has serine/threonine protein kinase activity: both lipid and protein kinase activities are required for beta-adrenergic receptor endocytosis. May also have a scaffolding role in modulating cardiac contractility. Contributes to cardiac hypertrophy under pathological stress. Through simultaneous binding of PDE3B to RAPGEF3 and PIK3R6 is assembled in a signaling complex in which the PI3K gamma complex is activated by RAPGEF3 and which is involved in angiogenesis. In neutrophils, participates in a phospholipase C-activating N-formyl peptide-activated GPCR (G protein-coupled receptor) signaling pathway downstream of RASGRP4-mediated Ras-activation, to promote neutrophil functional responses. The sequence is that of Phosphatidylinositol 4,5-bisphosphate 3-kinase catalytic subunit gamma isoform (PIK3CG) from Homo sapiens (Human).